The chain runs to 189 residues: Gluconokinase (189 aa).

16–23 (GVSGAGKS) is an ATP binding site.

The protein belongs to the gluconokinase GntK/GntV family. Monomer.

It catalyses the reaction D-gluconate + ATP = 6-phospho-D-gluconate + ADP + H(+). It functions in the pathway carbohydrate acid metabolism; D-gluconate degradation. Phosphorylates gluconate to 6-phosphogluconate. This Arabidopsis thaliana (Mouse-ear cress) protein is Gluconokinase.